The chain runs to 598 residues: IQ calmodulin-binding motif-containing protein 1 (598 aa).

The segment at 1 to 157 (MKPAGTDPRI…SLFWLLGGHV (157 aa)) is interaction with BBS1, BBS8 and BBS9. The interaction with CEP290, BBS1, BBS2, BBS4, BBS5, BBS7, BBS8 and BBS9 stretch occupies residues 287-598 (QEVEEQKLHK…MLFIGGTKPP (312 aa)). IQ domains lie at 294–317 (LHKA…LKKL), 318–338 (PSAV…MMLE), 387–416 (EEKS…SLTE), and 417–437 (YKAA…CRKK). Residues 336–362 (MLELNRQKEEEDLRLKLQLQRQRAMRL) adopt a coiled-coil conformation. The interaction with BBS1, BBS2, BBS4, BBS7, BBS8 and BBS9 stretch occupies residues 530–598 (AEGKEPEQFL…MLFIGGTKPP (69 aa)).

Interacts with calmodulin. Interacts with CEP290/NPHP6; IQCB1/NPHP5 and CEP290/NPHP6; are proposed to form a functional NPHP5-6 module localized to the centrosome. Interacts with ATXN10. Interacts with NPHP1, INVS, NPHP4 and RPGRIP1L; these interactions likely require additional interactors. Associates with the BBSome complex; interacts with BBS1, BBS2, BBS4, BBS5, BBS7, BBS8 and BBS9. As to expression, localized to the outer segment and connecting cilia of photoreceptor cells.

The protein resides in the cytoplasm. Its subcellular location is the cytoskeleton. It localises to the microtubule organizing center. It is found in the centrosome. Functionally, involved in ciliogenesis. The function in an early step in cilia formation depends on its association with CEP290/NPHP6. Involved in regulation of the BBSome complex integrity, specifically for presence of BBS2 and BBS5 in the complex, and in ciliary targeting of selected BBSome cargos. May play a role in controlling entry of the BBSome complex to cilia possibly implicating CEP290/NPHP6. In Mus musculus (Mouse), this protein is IQ calmodulin-binding motif-containing protein 1 (Iqcb1).